The following is a 139-amino-acid chain: uncharacterized protein (139 aa).

This is an uncharacterized protein from Burkholderia cepacia (Pseudomonas cepacia).